Consider the following 259-residue polypeptide: Major cell-binding factor (259 aa).

A signal peptide spans 1 to 26; it reads MVFRKSLLKLAVFALGACVAFSNANA.

The protein belongs to the bacterial solute-binding protein 3 family.

It localises to the cell surface. Common antigen and a major cell adherence molecule. Most probably involved, with PEB1C, in a binding-protein-dependent transport system for an amino acid. May be involved in binding to intestinal cells. This is Major cell-binding factor (peb1A) from Campylobacter jejuni subsp. jejuni serotype O:23/36 (strain 81-176).